The primary structure comprises 124 residues: Fluoride-specific ion channel FluC (124 aa).

Helical transmembrane passes span 1–21, 35–55, 68–88, and 99–119; these read MGVVFAVALGGAIGSALRFLL, VGTLFVNLVGAFFIGFFFAYL, LLITGLLGGLTTFSTYSYESF, and FLAYTLGTNVLGIFFTFLGYI. Residues Gly75 and Thr78 each coordinate Na(+).

It belongs to the fluoride channel Fluc/FEX (TC 1.A.43) family.

It is found in the cell inner membrane. The enzyme catalyses fluoride(in) = fluoride(out). With respect to regulation, na(+) is not transported, but it plays an essential structural role and its presence is essential for fluoride channel function. Its function is as follows. Fluoride-specific ion channel. Important for reducing fluoride concentration in the cell, thus reducing its toxicity. This Aquifex aeolicus (strain VF5) protein is Fluoride-specific ion channel FluC.